We begin with the raw amino-acid sequence, 573 residues long: ATP-dependent RNA helicase RhlB (573 aa).

The short motif at 9–37 (VTFSSFDLHPALIAGLESAGFTRCTPIQA) is the Q motif element. The region spanning 40-220 (LPVALPGGDV…YEHMNEPEKL (181 aa)) is the Helicase ATP-binding domain. 53–60 (AQTGTGKT) serves as a coordination point for ATP. The short motif at 166–169 (DEAD) is the DEAD box element. A Helicase C-terminal domain is found at 231–393 (RVRQRIYFPS…PVTSELLTPL (163 aa)). A disordered region spans residues 391–560 (TPLPRAPRVP…KPSGSPSLLS (170 aa)). Positions 402–411 (EGEEADDDAG) are enriched in acidic residues. Residues 419 to 432 (REAREQRAAEEQRR) are compositionally biased toward basic and acidic residues. Residues 435–450 (GRSGSGGSRSGSGGGG) are compositionally biased toward gly residues. The span at 451–462 (GRREGAGADGKP) shows a compositional bias: basic and acidic residues. A compositionally biased stretch (low complexity) spans 484–499 (PVVAAAAGQAPSAGVA). A compositionally biased stretch (basic residues) spans 505–514 (PRKRRRRRNG). The segment covering 541 to 560 (VVAKPVRAAAKPSGSPSLLS) has biased composition (low complexity).

The protein belongs to the DEAD box helicase family. RhlB subfamily. In terms of assembly, component of the RNA degradosome, which is a multiprotein complex involved in RNA processing and mRNA degradation.

The protein localises to the cytoplasm. The enzyme catalyses ATP + H2O = ADP + phosphate + H(+). Functionally, DEAD-box RNA helicase involved in RNA degradation. Has RNA-dependent ATPase activity and unwinds double-stranded RNA. In Xanthomonas euvesicatoria pv. vesicatoria (strain 85-10) (Xanthomonas campestris pv. vesicatoria), this protein is ATP-dependent RNA helicase RhlB.